The sequence spans 447 residues: Phosphatidylinositol 4-kinase type 2-alpha (447 aa).

Residues Met-1–Glu-77 form a disordered region. The span at Arg-48–Glu-77 shows a compositional bias: basic and acidic residues. The PI3K/PI4K catalytic domain maps to Gly-92–Thr-421. The tract at residues Ile-98–Gly-104 is G-loop. ATP contacts are provided by residues Tyr-99–Ser-105 and Lys-120. The tract at residues Glu-125 to Tyr-127 is important for substrate binding. The tract at residues Lys-133–Cys-146 is important for interaction with membranes. Residues Cys-142, Cys-143, Cys-145, and Cys-146 are each lipidated (S-palmitoyl cysteine). Gln-229 to Val-232 contributes to the ATP binding site. The important for interaction with membranes stretch occupies residues Lys-236–Arg-244. Positions Arg-273–Asn-281 are catalytic loop. An activation loop region spans residues Ala-312–Phe-332. Residue Asp-314 participates in ATP binding. An important for interaction with membranes region spans residues Trp-327 to Trp-336.

It belongs to the PI3/PI4-kinase family. Type II PI4K subfamily.

The protein localises to the golgi apparatus. It localises to the trans-Golgi network membrane. Its subcellular location is the membrane raft. The protein resides in the endosome. It is found in the cytoplasmic vesicle. The protein localises to the cell projection. It localises to the dendrite. Its subcellular location is the presynaptic cell membrane. The protein resides in the synapse. It is found in the synaptosome. The protein localises to the mitochondrion. It localises to the membrane. Its subcellular location is the cell membrane. The protein resides in the perikaryon. It is found in the neuron projection. The catalysed reaction is a 1,2-diacyl-sn-glycero-3-phospho-(1D-myo-inositol) + ATP = a 1,2-diacyl-sn-glycero-3-phospho-(1D-myo-inositol 4-phosphate) + ADP + H(+). In terms of biological role, membrane-bound phosphatidylinositol-4 kinase (PI4-kinase) that catalyzes the phosphorylation of phosphatidylinositol (PI) to phosphatidylinositol 4-phosphate (PI4P), a lipid that plays important roles in endocytosis, Golgi function, protein sorting and membrane trafficking. Besides, phosphorylation of phosphatidylinositol (PI) to phosphatidylinositol 4-phosphate (PI4P) is the first committed step in the generation of phosphatidylinositol 4,5-bisphosphate (PIP2), a precursor of the second messenger inositol 1,4,5-trisphosphate (InsP3). This chain is Phosphatidylinositol 4-kinase type 2-alpha (pi4k2a), found in Danio rerio (Zebrafish).